Reading from the N-terminus, the 206-residue chain is Putative precorrin-2 dehydrogenase (206 aa).

Residues 20-21 and 41-46 each bind NAD(+); these read SV and KEFDEE.

Belongs to the precorrin-2 dehydrogenase / sirohydrochlorin ferrochelatase family. As to quaternary structure, homodimer.

The catalysed reaction is precorrin-2 + NAD(+) = sirohydrochlorin + NADH + 2 H(+). Its pathway is porphyrin-containing compound metabolism; siroheme biosynthesis; sirohydrochlorin from precorrin-2: step 1/1. Functionally, involved in the archaeal biosynthesis of heme. Catalyzes the oxiation of precorrin-2 into sirohydroclorin. The sequence is that of Putative precorrin-2 dehydrogenase from Methanocaldococcus jannaschii (strain ATCC 43067 / DSM 2661 / JAL-1 / JCM 10045 / NBRC 100440) (Methanococcus jannaschii).